The following is a 126-amino-acid chain: Large ribosomal subunit protein bL12 (126 aa).

Belongs to the bacterial ribosomal protein bL12 family. In terms of assembly, homodimer. Part of the ribosomal stalk of the 50S ribosomal subunit. Forms a multimeric L10(L12)X complex, where L10 forms an elongated spine to which 2 to 4 L12 dimers bind in a sequential fashion. Binds GTP-bound translation factors.

Functionally, forms part of the ribosomal stalk which helps the ribosome interact with GTP-bound translation factors. Is thus essential for accurate translation. In Bordetella petrii (strain ATCC BAA-461 / DSM 12804 / CCUG 43448), this protein is Large ribosomal subunit protein bL12.